We begin with the raw amino-acid sequence, 282 residues long: Probable protein phosphatase 2C 45 (282 aa).

In terms of domain architecture, PPM-type phosphatase spans 27–272; the sequence is SYGYASSPGK…DNITCVVVRF (246 aa). The Mn(2+) site is built by aspartate 63, glycine 64, aspartate 224, and aspartate 263.

Belongs to the PP2C family. It depends on Mg(2+) as a cofactor. The cofactor is Mn(2+).

It catalyses the reaction O-phospho-L-seryl-[protein] + H2O = L-seryl-[protein] + phosphate. The catalysed reaction is O-phospho-L-threonyl-[protein] + H2O = L-threonyl-[protein] + phosphate. This Oryza sativa subsp. japonica (Rice) protein is Probable protein phosphatase 2C 45.